The primary structure comprises 316 residues: Secondary metabolism regulator laeA (316 aa).

It belongs to the methyltransferase superfamily. LaeA methyltransferase family. In terms of assembly, component of the heterotrimeric velvet complex composed of laeA, veA and velB; VeA acting as a bridging protein between laeA and velB.

The protein resides in the nucleus. It catalyses the reaction L-methionyl-[protein] + S-adenosyl-L-methionine = S-methyl-L-methionyl-[protein] + S-adenosyl-L-homocysteine. Functionally, methyltransferase that performs automethylation. No other methyl-accepting substrate has been identified yet. Component of the velvet transcription factor complex that acts as a global regulator for secondary metabolite gene expression. Controls the biosynthetic gene cluster for beauvericin, a depsipeptide mycotoxin that functions as a virulence determinant. The velvet complex also regulates chromatin structure and transcription of siderophore biosynthetic genes and is required for infection of tomato plants. The velvet complex also governs expression of nitrate metabolism genes. The chain is Secondary metabolism regulator laeA from Fusarium oxysporum f. sp. lycopersici (strain 4287 / CBS 123668 / FGSC 9935 / NRRL 34936) (Fusarium vascular wilt of tomato).